A 130-amino-acid polypeptide reads, in one-letter code: Small ribosomal subunit protein uS8 (130 aa).

It belongs to the universal ribosomal protein uS8 family. As to quaternary structure, part of the 30S ribosomal subunit. Contacts proteins S5 and S12.

Functionally, one of the primary rRNA binding proteins, it binds directly to 16S rRNA central domain where it helps coordinate assembly of the platform of the 30S subunit. This Buchnera aphidicola subsp. Acyrthosiphon pisum (strain 5A) protein is Small ribosomal subunit protein uS8.